Here is a 360-residue protein sequence, read N- to C-terminus: Peptide chain release factor 1 (360 aa).

Position 237 is an N5-methylglutamine (Gln237).

Belongs to the prokaryotic/mitochondrial release factor family. In terms of processing, methylated by PrmC. Methylation increases the termination efficiency of RF1.

It localises to the cytoplasm. Functionally, peptide chain release factor 1 directs the termination of translation in response to the peptide chain termination codons UAG and UAA. This Pseudomonas putida (strain GB-1) protein is Peptide chain release factor 1.